The sequence spans 108 residues: MPLTPPPDHSITYRILAVGLCSCCAIYAATRSTLPHTGDNLHSLPYGGKYSDGTKSICYSGPGPTPDIPTHLPALLVLVLVVAIYASSRLDFSVNYRCSCRVHNRSGQ.

The Cytoplasmic portion of the chain corresponds to 1-14 (MPLTPPPDHSITYR). Residues 15-31 (ILAVGLCSCCAIYAATR) form a helical membrane-spanning segment. Residues 32–67 (STLPHTGDNLHSLPYGGKYSDGTKSICYSGPGPTPD) are Lumenal-facing. Residues 68–85 (IPTHLPALLVLVLVVAIY) form a helical membrane-spanning segment. The Cytoplasmic portion of the chain corresponds to 86–108 (ASSRLDFSVNYRCSCRVHNRSGQ).

It belongs to the Tymovirales TGBp2 protein family.

It localises to the host endoplasmic reticulum membrane. Its function is as follows. Plays a role in viral cell-to-cell propagation, by facilitating genome transport to neighboring plant cells through plasmosdesmata,. In Strawberry mild yellow edge-associated virus (SMYEaV), this protein is Movement protein TGB2.